The primary structure comprises 657 residues: tRNA 5-methylaminomethyl-2-thiouridine biosynthesis bifunctional protein MnmC (657 aa).

Positions 1–233 (MPRGLILATP…KRDMTVAAFP (233 aa)) are tRNA (mnm(5)s(2)U34)-methyltransferase. Residues 256 to 657 (LGAGLAGCSV…RALRHGKHAA (402 aa)) are FAD-dependent cmnm(5)s(2)U34 oxidoreductase.

The protein in the N-terminal section; belongs to the methyltransferase superfamily. tRNA (mnm(5)s(2)U34)-methyltransferase family. In the C-terminal section; belongs to the DAO family. FAD serves as cofactor.

It localises to the cytoplasm. It carries out the reaction 5-aminomethyl-2-thiouridine(34) in tRNA + S-adenosyl-L-methionine = 5-methylaminomethyl-2-thiouridine(34) in tRNA + S-adenosyl-L-homocysteine + H(+). Functionally, catalyzes the last two steps in the biosynthesis of 5-methylaminomethyl-2-thiouridine (mnm(5)s(2)U) at the wobble position (U34) in tRNA. Catalyzes the FAD-dependent demodification of cmnm(5)s(2)U34 to nm(5)s(2)U34, followed by the transfer of a methyl group from S-adenosyl-L-methionine to nm(5)s(2)U34, to form mnm(5)s(2)U34. This is tRNA 5-methylaminomethyl-2-thiouridine biosynthesis bifunctional protein MnmC from Ralstonia nicotianae (strain ATCC BAA-1114 / GMI1000) (Ralstonia solanacearum).